A 549-amino-acid polypeptide reads, in one-letter code: Glucose-6-phosphate isomerase (549 aa).

The active-site Proton donor is E355. Residues H386 and K514 contribute to the active site.

This sequence belongs to the GPI family.

It is found in the cytoplasm. The enzyme catalyses alpha-D-glucose 6-phosphate = beta-D-fructose 6-phosphate. The protein operates within carbohydrate biosynthesis; gluconeogenesis. Its pathway is carbohydrate degradation; glycolysis; D-glyceraldehyde 3-phosphate and glycerone phosphate from D-glucose: step 2/4. Functionally, catalyzes the reversible isomerization of glucose-6-phosphate to fructose-6-phosphate. The polypeptide is Glucose-6-phosphate isomerase (Buchnera aphidicola subsp. Acyrthosiphon pisum (strain 5A)).